A 530-amino-acid polypeptide reads, in one-letter code: Calcium uptake protein 3, mitochondrial (530 aa).

The N-terminal 43 residues, 1–43, are a transit peptide targeting the mitochondrion; sequence MAALRRLLWPPPRVSPPLCAHQPLLGPWGRPAVTTLGLPGRPF. Positions 92-115 are disordered; sequence GSPATGRPSKSAATEPEDPPRGRG. An EF-hand 1 domain is found at 232 to 267; the sequence is KPHAGFRIAFNMFDTDGNEMVDKKEFLVLQEIFRKK. 6 residues coordinate Ca(2+): Asp-245, Asp-247, Asn-249, Met-251, Asp-253, and Glu-256. The region spanning 401-436 is the EF-hand 2; degenerate domain; the sequence is VENTSVFLENVRYSIPEEKGITFDEFRSFFQFLNNL. The EF-hand 3 domain maps to 470 to 505; that stretch reads FSPHLVNTVFKIFDVDKDDQLSYKEFIGIMKDRLHR. Positions 483, 485, 487, 489, and 494 each coordinate Ca(2+).

The protein belongs to the MICU1 family. MICU3 subfamily. As to quaternary structure, heterodimer; disulfide-linked; heterodimerizes with MICU1. Component of the uniplex complex, composed of MCU, EMRE/SMDT1, MICU1 and MICU3 in a 4:4:1:1 stoichiometry. In terms of tissue distribution, specifically expressed in the central nervous system and skeletal muscle.

The protein resides in the mitochondrion intermembrane space. It localises to the mitochondrion inner membrane. Tissue-specific calcium sensor of the mitochondrial calcium uniporter (MCU) channel, which specifically regulates MCU channel activity in the central nervous system and skeletal muscle. Senses calcium level via its EF-hand domains: compared to MICU1 and MICU2, MICU3 has a higher affinity for calcium. MICU1 and MICU3 form a disulfide-linked heterodimer that stimulates and inhibits MCU activity, depending on the concentration of calcium. At low calcium levels, MICU1 occludes the pore of the MCU channel, preventing mitochondrial calcium uptake. At higher calcium levels, calcium-binding to MICU1 and MICU3 induces a conformational change that weakens MCU-MICU1 interactions and moves the MICU1-MICU3 heterodimer away from the pore, allowing calcium permeation through the MCU channel. The high calcium affinity of MICU3 lowers the calcium threshold necessary for calcium permeation through the MCU channel. The MICU1-MICU3 heterodimer promotes flexibility of neurotransmission in neuronal cells by enhancing mitochondrial calcium uptake in presynapses. It is also required to increase mitochondrial calcium uptake in skeletal muscle cells, thereby increasing ATP production. The chain is Calcium uptake protein 3, mitochondrial from Homo sapiens (Human).